Consider the following 267-residue polypeptide: Phosphatidylglycerol--prolipoprotein diacylglyceryl transferase (267 aa).

A run of 3 helical transmembrane segments spans residues 18-38 (LSVR…MWFA), 57-77 (FLFY…VLFY), and 95-115 (GGMS…IFAW). A 1,2-diacyl-sn-glycero-3-phospho-(1'-sn-glycerol) is bound at residue arginine 140. Helical transmembrane passes span 173–193 (SQLY…QWFI), 200–220 (GSVA…IEYF), and 233–253 (FISM…GLLI).

Belongs to the Lgt family.

It is found in the cell inner membrane. It carries out the reaction L-cysteinyl-[prolipoprotein] + a 1,2-diacyl-sn-glycero-3-phospho-(1'-sn-glycerol) = an S-1,2-diacyl-sn-glyceryl-L-cysteinyl-[prolipoprotein] + sn-glycerol 1-phosphate + H(+). It functions in the pathway protein modification; lipoprotein biosynthesis (diacylglyceryl transfer). Catalyzes the transfer of the diacylglyceryl group from phosphatidylglycerol to the sulfhydryl group of the N-terminal cysteine of a prolipoprotein, the first step in the formation of mature lipoproteins. The protein is Phosphatidylglycerol--prolipoprotein diacylglyceryl transferase of Pseudoalteromonas translucida (strain TAC 125).